The primary structure comprises 289 residues: Glycine--tRNA ligase alpha subunit (289 aa).

The protein belongs to the class-II aminoacyl-tRNA synthetase family. In terms of assembly, tetramer of two alpha and two beta subunits.

Its subcellular location is the cytoplasm. It carries out the reaction tRNA(Gly) + glycine + ATP = glycyl-tRNA(Gly) + AMP + diphosphate. The protein is Glycine--tRNA ligase alpha subunit of Prochlorococcus marinus subsp. pastoris (strain CCMP1986 / NIES-2087 / MED4).